The chain runs to 622 residues: Probable potassium transport system protein Kup (622 aa).

Transmembrane regions (helical) follow at residues 8-28 (LAALTLGAIGVVYGDIGTSVL), 50-70 (VLSVLFWTLTVIVSLKYVVLV), 100-120 (GWLLGLGIFGTSLFYGDGVIT), 137-157 (PHFGKAVIPLTLVVLFGLFAV), 169-189 (FGPVTLVWFFTIAALGVPHIV), 203-223 (ALGFILGNPGISFIILGAVVL), 247-267 (WFSVAMPALTINYFGQGALLL), 285-305 (ALVPLVVLATMATVIASQALI), 337-357 (IYLPFVNWSLFVAIVLAVVMF), 366-386 (AYGIAVTLDMLITTVLTFFVI), 392-412 (YPLALCVATTGFFFVVDLAFF), and 419-439 (LLQGGWFPLMIGGLVFTLMMT).

It belongs to the HAK/KUP transporter (TC 2.A.72) family.

It localises to the cell inner membrane. The catalysed reaction is K(+)(in) + H(+)(in) = K(+)(out) + H(+)(out). Transport of potassium into the cell. Likely operates as a K(+):H(+) symporter. The chain is Probable potassium transport system protein Kup from Acidovorax ebreus (strain TPSY) (Diaphorobacter sp. (strain TPSY)).